The sequence spans 125 residues: Small ribosomal subunit protein uS13 (125 aa).

Positions 93-125 (RRGLPVRGQRTKTNARTRKGPKRTVAGKKKAGR) are disordered.

This sequence belongs to the universal ribosomal protein uS13 family. As to quaternary structure, part of the 30S ribosomal subunit. Forms a loose heterodimer with protein S19. Forms two bridges to the 50S subunit in the 70S ribosome.

In terms of biological role, located at the top of the head of the 30S subunit, it contacts several helices of the 16S rRNA. In the 70S ribosome it contacts the 23S rRNA (bridge B1a) and protein L5 of the 50S subunit (bridge B1b), connecting the 2 subunits; these bridges are implicated in subunit movement. Contacts the tRNAs in the A and P-sites. The protein is Small ribosomal subunit protein uS13 of Renibacterium salmoninarum (strain ATCC 33209 / DSM 20767 / JCM 11484 / NBRC 15589 / NCIMB 2235).